A 479-amino-acid polypeptide reads, in one-letter code: MSIVVKNNIHWVGQRDWEVRDFHGTEYKTLRGSSYNSYLIREEKNVLIDTVDHKFSREFVQNLRNEIDLADIDYIVINHAEEDHAGALTELMAQIPDTPIYCTANAIDSINGHHHHPEWNFNVVKTGDTLDIGNGKQLIFVETPMLHWPDSMMTYLTGDAVLFSNDAFGQHYCDEHLFNDEVDQTELFEQCQRYYANILTPFSRLVTPKITEILGFNLPVDMIATSHGVVWRDNPTQIVELYLKWAADYQEDRITIFYDTMSNNTRMMADAIAQGIAETDPRVAVKIFNVARSDKNEILTNVFRSKGMLVGTSTMNNVMMPKIAGLVEEMTGLRFRNKRASAFGSHGWSGGAVDRLSTRLQDAGFEMSLSLKAKWRPDQDALELCREHGREIARQWALAPLPQSTVNTVVKEETSATTTADLGPRMQCSVCQWIYDPAKGEPMQDVAPGTPWSEVPDNFLCPECSLGKDVFDELASEAK.

Positions 30 to 210 (LRGSSYNSYL…PFSRLVTPKI (181 aa)) are zinc metallo-hydrolase. Histidine 79, glutamate 81, aspartate 83, histidine 147, aspartate 166, and histidine 227 together coordinate Fe cation. The region spanning 254–393 (ITIFYDTMSN…LCREHGREIA (140 aa)) is the Flavodoxin-like domain. FMN-binding positions include 260 to 264 (TMSNN) and 342 to 369 (AFGS…EMSL). The Rubredoxin-like domain occupies 423 to 474 (GPRMQCSVCQWIYDPAKGEPMQDVAPGTPWSEVPDNFLCPECSLGKDVFDEL). Fe cation is bound by residues cysteine 428, cysteine 431, cysteine 461, and cysteine 464.

The protein in the N-terminal section; belongs to the zinc metallo-hydrolase group 3 family. In terms of assembly, homotetramer. It depends on Fe cation as a cofactor. Requires FMN as cofactor.

The protein localises to the cytoplasm. Its pathway is nitrogen metabolism; nitric oxide reduction. Anaerobic nitric oxide reductase; uses NADH to detoxify nitric oxide (NO), protecting several 4Fe-4S NO-sensitive enzymes. Has at least 2 reductase partners, only one of which (NorW, flavorubredoxin reductase) has been identified. NO probably binds to the di-iron center; electrons enter from the NorW at rubredoxin and are transferred sequentially to the FMN center and the di-iron center. Also able to function as an aerobic oxygen reductase. This chain is Anaerobic nitric oxide reductase flavorubredoxin, found in Escherichia coli (strain SMS-3-5 / SECEC).